Here is a 490-residue protein sequence, read N- to C-terminus: Glutamate--tRNA ligase (490 aa).

The 'HIGH' region signature appears at 9 to 19 (PSPTGLQHIGG). The short motif at 251-255 (KLSKR) is the 'KMSKS' region element. Residue Lys-254 coordinates ATP.

This sequence belongs to the class-I aminoacyl-tRNA synthetase family. Glutamate--tRNA ligase type 1 subfamily. As to quaternary structure, monomer.

It is found in the cytoplasm. It carries out the reaction tRNA(Glu) + L-glutamate + ATP = L-glutamyl-tRNA(Glu) + AMP + diphosphate. In terms of biological role, catalyzes the attachment of glutamate to tRNA(Glu) in a two-step reaction: glutamate is first activated by ATP to form Glu-AMP and then transferred to the acceptor end of tRNA(Glu). The polypeptide is Glutamate--tRNA ligase (Borreliella afzelii (strain PKo) (Borrelia afzelii)).